The chain runs to 785 residues: Protein SEY1 (785 aa).

The Cytoplasmic portion of the chain corresponds to 1–690 (MTDLEVSAIQ…KRSVINSKTE (690 aa)). In terms of domain architecture, GB1/RHD3-type G spans 40–266 (GLNYHIVSVF…SEDQLFNEGY (227 aa)). A GTP-binding site is contributed by 50-57 (GSQSTGKS). The stretch at 451–479 (PKLRELEEELSNLRTELVNKEQENIKTKI) forms a coiled coil. The helical transmembrane segment at 691–711 (VPLYIYALLLVLGWNEFMIIL) threads the bilayer. Residues 712–714 (RNP) lie on the Lumenal side of the membrane. Residues 715–735 (LLITLLLIGLTGLYLGYKTKL) form a helical membrane-spanning segment. The Cytoplasmic portion of the chain corresponds to 736–785 (LGPIVQVVQAMIQELQDQAKNKLRDVLVSEPEAPSQVRIGKEVDATKDED).

It belongs to the TRAFAC class dynamin-like GTPase superfamily. GB1/RHD3 GTPase family. RHD3 subfamily.

It is found in the endoplasmic reticulum membrane. Cooperates with the reticulon proteins and tubule-shaping DP1 family proteins to generate and maintain the structure of the tubular endoplasmic reticulum network. Has GTPase activity, which is required for its function in ER organization. This chain is Protein SEY1, found in Komagataella phaffii (strain GS115 / ATCC 20864) (Yeast).